The primary structure comprises 444 residues: Tryptophan 5-hydroxylase 1 (444 aa).

Positions 19–94 constitute an ACT domain; the sequence is TLIFSLKNEV…TVLSVDSPDQ (76 aa). The residue at position 58 (Ser58) is a Phosphoserine; by PKA. Tyr235, Arg257, and Thr265 together coordinate L-tryptophan. Positions 272, 277, and 317 each coordinate Fe cation. L-tryptophan contacts are provided by Ser336 and Ile366.

The protein belongs to the biopterin-dependent aromatic amino acid hydroxylase family. As to quaternary structure, homotetramer. Interacts with DNAJC12. Fe(2+) serves as cofactor. Ubiquitinated, leading to its degradation by the proteasome. Ubiquitinated is triggered by phosphorylation. Post-translationally, phosphorylated; triggering degradation by the proteasome.

The catalysed reaction is (6R)-L-erythro-5,6,7,8-tetrahydrobiopterin + L-tryptophan + O2 = 5-hydroxy-L-tryptophan + (4aS,6R)-4a-hydroxy-L-erythro-5,6,7,8-tetrahydrobiopterin. It functions in the pathway aromatic compound metabolism; serotonin biosynthesis; serotonin from L-tryptophan: step 1/2. Functionally, oxidizes L-tryptophan to 5-hydroxy-l-tryptophan in the rate-determining step of serotonin biosynthesis. This Rattus norvegicus (Rat) protein is Tryptophan 5-hydroxylase 1 (Tph1).